Reading from the N-terminus, the 290-residue chain is Ribosomal RNA small subunit methyltransferase A (290 aa).

S-adenosyl-L-methionine contacts are provided by N27, L29, G54, E75, D100, and N125.

It belongs to the class I-like SAM-binding methyltransferase superfamily. rRNA adenine N(6)-methyltransferase family. RsmA subfamily.

The protein resides in the cytoplasm. It catalyses the reaction adenosine(1518)/adenosine(1519) in 16S rRNA + 4 S-adenosyl-L-methionine = N(6)-dimethyladenosine(1518)/N(6)-dimethyladenosine(1519) in 16S rRNA + 4 S-adenosyl-L-homocysteine + 4 H(+). Functionally, specifically dimethylates two adjacent adenosines (A1518 and A1519) in the loop of a conserved hairpin near the 3'-end of 16S rRNA in the 30S particle. May play a critical role in biogenesis of 30S subunits. The polypeptide is Ribosomal RNA small subunit methyltransferase A (Streptococcus pneumoniae (strain P1031)).